The following is a 258-amino-acid chain: Cytolethal distending toxin subunit A (258 aa).

Positions 1–21 (MANKRTPIFIAGILIPILLNG) are cleaved as a signal peptide. Cysteine 22 carries N-palmitoyl cysteine lipidation. Cysteine 22 carries S-diacylglycerol cysteine lipidation. Residues 40–71 (VEGGPTVPSPDEPGLPLPGPGPALPTNGAIPI) form a disordered region. Residues 46–62 (VPSPDEPGLPLPGPGPA) are compositionally biased toward pro residues. A mediates binding to target cells region spans residues 93 to 104 (WSRGAGSSLWAY). The region spanning 125–223 (RPNTIQFRNV…EKNFEFMWSI (99 aa)) is the Ricin B-type lectin domain. Residues 236–258 (KPEIRPFPPQPIEPDEHSTGGEQ) are disordered. A compositionally biased stretch (basic and acidic residues) spans 249-258 (PDEHSTGGEQ).

As to quaternary structure, heterotrimer of 3 subunits, CdtA, CdtB and CdtC.

The protein localises to the cell outer membrane. Functionally, CDTs are cytotoxins which induce host cell distension, growth arrest in G2/M phase, nucleus swelling, and chromatin fragmentation in HeLa cells. CdtA, along with CdtC, probably forms a heterodimeric subunit required for the delivery of CdtB. The polypeptide is Cytolethal distending toxin subunit A (cdtA) (Escherichia coli).